A 156-amino-acid chain; its full sequence is MPRKGPVPKRDVLPDPIYNSKIFTKLVNQLMWDGKKSLAEKICYGAFAIVQSKTRREPLEVFEEAMKNITPIVEVRARRVGGANYQVPVEVRSDRRQTLAIRWLVGYARKRGEKTMAERLAGEIMDAANHTGAAVKKREDTHKMAEANKAFAHYRW.

It belongs to the universal ribosomal protein uS7 family. In terms of assembly, part of the 30S ribosomal subunit. Contacts proteins S9 and S11.

In terms of biological role, one of the primary rRNA binding proteins, it binds directly to 16S rRNA where it nucleates assembly of the head domain of the 30S subunit. Is located at the subunit interface close to the decoding center, probably blocks exit of the E-site tRNA. This chain is Small ribosomal subunit protein uS7, found in Syntrophomonas wolfei subsp. wolfei (strain DSM 2245B / Goettingen).